The primary structure comprises 199 residues: Chaperone protein TorD (199 aa).

It belongs to the TorD/DmsD family. TorD subfamily.

Its subcellular location is the cytoplasm. In terms of biological role, involved in the biogenesis of TorA. Acts on TorA before the insertion of the molybdenum cofactor and, as a result, probably favors a conformation of the apoenzyme that is competent for acquiring the cofactor. The sequence is that of Chaperone protein TorD from Escherichia coli O81 (strain ED1a).